The chain runs to 266 residues: tRNA pseudouridine synthase A (266 aa).

The active-site Nucleophile is Asp-51. Tyr-106 provides a ligand contact to substrate.

Belongs to the tRNA pseudouridine synthase TruA family.

It carries out the reaction uridine(38/39/40) in tRNA = pseudouridine(38/39/40) in tRNA. In terms of biological role, formation of pseudouridine at positions 38, 39 and 40 in the anticodon stem and loop of transfer RNAs. This is tRNA pseudouridine synthase A from Pyrococcus furiosus (strain ATCC 43587 / DSM 3638 / JCM 8422 / Vc1).